The primary structure comprises 161 residues: pEARLI1-like lipid transfer protein 1 (161 aa).

The signal sequence occupies residues 1-25; the sequence is MASKNSASLALFFALNILFFTLTVA. One copy of the A-1 repeat lies at 32–39; it reads PSPKPKPV. Residues 32 to 76 are disordered; it reads PSPKPKPVPSPKPKPVQCPPPPRPSVPSPNPRPVTPPRTPGSSGN. Residues 33–70 show a composition bias toward pro residues; that stretch reads SPKPKPVPSPKPKPVQCPPPPRPSVPSPNPRPVTPPRT. Residues 34–49 are 2 X 8 AA tandem repeats A of P-S-P-K-P-K-P-V; it reads PKPKPVPSPKPKPVQC. The stretch at 40–47 is one A-2 repeat; that stretch reads PSPKPKPV.

This sequence belongs to the plant LTP family. PEARLI1 subfamily. Self-interacts and binds to DIR1. Interacts with PDLP1.

It is found in the secreted. Its subcellular location is the cell wall. The protein localises to the endoplasmic reticulum. The protein resides in the cell junction. It localises to the plasmodesma. It is found in the plastid. Its subcellular location is the chloroplast. Probable lipid transfer protein (LTP). Seems to control the flowering process and lignin synthesis. Together with DIR1, required for glycerol-3-phosphate- (G3P) and azelaic acid- (AA) induced systemic acquired resistance (SAR). Component of plant systemic immunity involved in priming defenses in a AA-dependent manner, by modulating production and/or translocation of a mobile signal(s) during SAR. Confers resistance to Botrytis cinerea and Pseudomonas syringae pv. tomato DC3000 and PmaDG3. May be involved in induced systemic resistance (ISR) mediated by non-pathogenic bacteria (e.g. P. fluorescens GM30). Prevents electrolyte leakage during freezing damage. The polypeptide is pEARLI1-like lipid transfer protein 1 (AZI1) (Arabidopsis thaliana (Mouse-ear cress)).